Here is a 131-residue protein sequence, read N- to C-terminus: MAQIPARGDCSRQLTRKQAGDAWEAAARRWLESKGLRFIAANVRERGGEIDLIMRDGKTTVFVEVRYRRSGLYGGAAASVTHSKQHKLLHTARLWLARQNGSFDTVDCRFDVLAFTGNEIEWFRDAFNDHS.

It belongs to the UPF0102 family.

In Salmonella agona (strain SL483), this protein is UPF0102 protein YraN.